The primary structure comprises 134 residues: Probable glycine cleavage system H protein (134 aa).

The Lipoyl-binding domain maps to 29 to 110; it reads TVLVGISDYA…PYENWIAKLK (82 aa). Lysine 70 carries the N6-lipoyllysine modification.

Belongs to the GcvH family. As to quaternary structure, the glycine cleavage system is composed of four proteins: P, T, L and H. (R)-lipoate is required as a cofactor.

Its function is as follows. The glycine cleavage system catalyzes the degradation of glycine. The H protein shuttles the methylamine group of glycine from the P protein to the T protein. In Thermococcus kodakarensis (strain ATCC BAA-918 / JCM 12380 / KOD1) (Pyrococcus kodakaraensis (strain KOD1)), this protein is Probable glycine cleavage system H protein.